Here is a 486-residue protein sequence, read N- to C-terminus: O-methyltransferase gedA (486 aa).

Residues Gly-298–Gly-299, Asp-321, Ser-353–Phe-354, and Arg-369 contribute to the S-adenosyl-L-methionine site. His-373 functions as the Proton acceptor in the catalytic mechanism.

Belongs to the class I-like SAM-binding methyltransferase superfamily. Cation-independent O-methyltransferase family.

The enzyme catalyses emodin + S-adenosyl-L-methionine = questin + S-adenosyl-L-homocysteine + H(+). It functions in the pathway secondary metabolite biosynthesis. O-methyltransferase; part of the gene cluster that mediates the biosynthesis of geodin, an intermediate in the biosynthesis of other natural products. The pathway begins with the synthesis of atrochrysone thioester by the polyketide synthase (PKS) gedC. The atrochrysone carboxyl ACP thioesterase gedB then breaks the thioester bond and releases the atrochrysone carboxylic acid from gedC. The atrochrysone carboxylic acid is then converted to atrochrysone which is further transformed into emodinanthrone. The next step is performed by the emodinanthrone oxygenase gedH that catalyzes the oxidation of emodinanthrone to emodin. Emodin O-methyltransferase encoded probably by gedA then catalyzes methylation of the 8-hydroxy group of emodin to form questin. Ring cleavage of questin by questin oxidase gedK leads to desmethylsulochrin via several intermediates including questin epoxide. Another methylation step probably catalyzed by methyltransferase gedG leads to the formation of sulochrin which is further converted to dihydrogeodin by the sulochrin halogenase gedL. Finally, the dihydrogeodin oxidase gedJ catalyzes the stereospecific phenol oxidative coupling reaction converting dihydrogeodin to geodin. The protein is O-methyltransferase gedA of Aspergillus terreus (strain NIH 2624 / FGSC A1156).